The sequence spans 148 residues: MKIAVKKSCRNLSELPQELLYKILGLLPTRNVVSTSLISHQRRSQFHWMERLKFRYPRLLLDNRVPDAENEAENLVPGPSRCYHEDPKSCIIQEQIFLPYTSGSFHVQTRISSQRLIHNQHRKCQLRCVVQLSSFCLLSLQQIRLQRC.

Positions 9 to 59 (CRNLSELPQELLYKILGLLPTRNVVSTSLISHQRRSQFHWMERLKFRYPRL) constitute an F-box domain.

The polypeptide is F-box protein At3g55900 (Arabidopsis thaliana (Mouse-ear cress)).